Here is a 1253-residue protein sequence, read N- to C-terminus: Cytoplasmic FMR1-interacting protein 1 (1253 aa).

Ser-583 is modified (phosphoserine). At Thr-1234 the chain carries Phosphothreonine.

Belongs to the CYFIP family. In terms of assembly, component of the WAVE1 complex composed of ABI2, CYFIP1 or CYFIP2, BRK1, NCKAP1 and WASF1/WAVE1. Within the complex, a heterodimer containing NCKAP1 and CYFIP1 interacts with a heterotrimer formed by WAVE1, ABI2 and BRK1. Component of the CYFIP1-EIF4E-FMR1 complex which is composed of CYFIP, EIF4E and FMR1. Interacts with FMR1 but does not bind to related proteins FXR1 or FXR2. Interaction with EIF4E stimulates FMR1 binding. Component of the WAVE2 complex composed of ABI1, CYFIP1/SRA1, NCKAP1/NAP1 (NCKAP1l/HEM1 in hematopoietic cells) and WASF2/WAVE2. Interacts with the active GTP-bound form of RAC1. Interacts through its C-terminus with the C-terminus of DPYSL2/CRMP2 which is necessary for DPYSL2-induced axon outgrowth. Interacts with NYAP1, NYAP2 and MYO16. Interacts with TMEM108 (via N-terminus); the interaction associates TMEM108 with the WAVE1 complex.

It is found in the cytoplasm. Its subcellular location is the perinuclear region. It localises to the cell projection. The protein resides in the lamellipodium. The protein localises to the ruffle. It is found in the synapse. Its subcellular location is the synaptosome. Functionally, component of the CYFIP1-EIF4E-FMR1 complex which binds to the mRNA cap and mediates translational repression. In the CYFIP1-EIF4E-FMR1 complex this subunit is an adapter between EIF4E and FMR1. Promotes the translation repression activity of FMR1 in brain probably by mediating its association with EIF4E and mRNA. Regulates formation of membrane ruffles and lamellipodia. Plays a role in axon outgrowth. Binds to F-actin but not to RNA. Part of the WAVE complex that regulates actin filament reorganization via its interaction with the Arp2/3 complex. Actin remodeling activity is regulated by RAC1. Regulator of epithelial morphogenesis. As component of the WAVE1 complex, required for BDNF-NTRK2 endocytic trafficking and signaling from early endosomes. May act as an invasion suppressor in cancers. The polypeptide is Cytoplasmic FMR1-interacting protein 1 (Homo sapiens (Human)).